We begin with the raw amino-acid sequence, 217 residues long: UPF0502 protein VF_A0604 (217 aa).

Belongs to the UPF0502 family.

The chain is UPF0502 protein VF_A0604 from Aliivibrio fischeri (strain ATCC 700601 / ES114) (Vibrio fischeri).